A 515-amino-acid polypeptide reads, in one-letter code: Putative ammonium transporter 2 (515 aa).

The next 12 helical transmembrane spans lie at 34–54, 72–92, 124–144, 156–176, 191–211, 226–246, 266–286, 291–311, 321–337, 346–366, 381–401, and 404–424; these read GVWM…FGLL, VFDV…LTFG, GISY…STIV, SHCF…HWVW, AGCS…TLYL, VSDP…WLAF, AVGT…ITRL, IQMD…TGGC, LVGA…YPVT, VGVF…PAIF, FQTS…LLFL, and FVIL…LFLI.

It belongs to the ammonia transporter channel (TC 1.A.11.2) family.

The protein localises to the membrane. Involved in the uptake of ammonia. Implicated in aging. In Caenorhabditis elegans, this protein is Putative ammonium transporter 2 (amt-2).